Consider the following 264-residue polypeptide: SPARC (264 aa).

An N-terminal signal peptide occupies residues 1–16; it reads MRYALAACLLLLAASS. One can recognise a Follistatin-like domain in the interval 52-74; it reads PCEDHQCGWGKECVVGKKGEPTC. 7 disulfide bridges follow: cysteine 53/cysteine 64, cysteine 58/cysteine 74, cysteine 76/cysteine 110, cysteine 80/cysteine 103, cysteine 92/cysteine 135, cysteine 141/cysteine 228, and cysteine 236/cysteine 252. Positions 68 to 137 constitute a Kazal-like domain; the sequence is KKGEPTCECI…HLEYLGECKK (70 aa). Asparagine 96 carries an N-linked (GlcNAc...) asparagine glycan. Positions 224–259 constitute an EF-hand domain; that stretch reads PMESCIKPFLEGCDANNDGNISIKEWGKCLGLKEGE. 5 residues coordinate Ca(2+): aspartate 237, asparagine 239, aspartate 241, asparagine 243, and glutamate 248. A glycan (N-linked (GlcNAc...) asparagine) is linked at asparagine 243.

The protein belongs to the SPARC family. As to expression, expressed by body wall and sex muscle cells. Probable association with basement membranes.

The protein localises to the secreted. It localises to the extracellular space. Its subcellular location is the extracellular matrix. It is found in the basement membrane. Its function is as follows. Has a high affinity for collagen. Affects nematode body morphology and mobility. Essential for C.elegans development and muscle function. The cysteine-rich region could have protease inhibitory activity or may provide the framework for a protein binding module. Probable role in skeletal morphogenesis. This Caenorhabditis elegans protein is SPARC (ost-1).